We begin with the raw amino-acid sequence, 341 residues long: Glucokinase (341 aa).

18–23 (GDIGGT) serves as a coordination point for ATP.

Belongs to the bacterial glucokinase family.

The protein resides in the cytoplasm. The enzyme catalyses D-glucose + ATP = D-glucose 6-phosphate + ADP + H(+). The polypeptide is Glucokinase (Rhizobium etli (strain CIAT 652)).